A 345-amino-acid polypeptide reads, in one-letter code: Flotillin-like protein FloA 1 (345 aa).

Residues 26–46 (LLLLVGVFLALFFAAVLGFFF) form a helical membrane-spanning segment.

This sequence belongs to the flotillin-like FloA family. In terms of assembly, homooligomerizes.

Its subcellular location is the cell membrane. It is found in the membrane raft. Its function is as follows. Found in functional membrane microdomains (FMM) that may be equivalent to eukaryotic membrane rafts. FMMs are highly dynamic and increase in number as cells age. Flotillins are thought to be important factors in membrane fluidity. This chain is Flotillin-like protein FloA 1, found in Rhodopirellula baltica (strain DSM 10527 / NCIMB 13988 / SH1).